Reading from the N-terminus, the 567-residue chain is Pyrethroid hydrolase Ces2e (567 aa).

The N-terminal stretch at 1–36 (MAQTRAWKSIMPLESLPGWLNAVVWGLLLLFCQVQG) is a signal peptide. Pyrrolidone carboxylic acid is present on Gln-37. Residues Cys-105 and Cys-132 are joined by a disulfide bond. Catalysis depends on Ser-237, which acts as the Acyl-ester intermediate. A disulfide bond links Cys-289 and Cys-300. Residues Glu-354 and His-465 each act as charge relay system in the active site.

It belongs to the type-B carboxylesterase/lipase family. As to expression, expressed in liver.

It localises to the microsome. It carries out the reaction all-trans-retinyl hexadecanoate + H2O = all-trans-retinol + hexadecanoate + H(+). The enzyme catalyses (-)-trans-permethrin + H2O = (3-phenoxyphenyl)methanol + (1S,3R)-3-(2,2-dichlorovinyl)-2,2-dimethylcyclopropanecarboxylate + H(+). Carboxylesterase that catalyzes the hydrolysis of pyrethroids pesticides. Hydrolyzes trans-permethrin at a rate about 22-fold higher than cis-permethrin. Also hydrolyzes trans-cypermethrin. Hydrolyzes retinyl esters. The sequence is that of Pyrethroid hydrolase Ces2e from Rattus norvegicus (Rat).